The following is a 767-amino-acid chain: MSIADVEYEYVVLKINGYDISHLSRYEAVQKFLQSKETLVVEIRRQKHNALDLELKHGSNAKISKVDNPGELSVLTDKSAEGTITAASASQQINCPSSTSLKEIETKTPVVLTLRARSHEDRLGSLQAASKETQTQSVVGTDVLKDNDLVNTITDNFIEHEHHLFEQCLEPEIDIEEVTLVKGVEQSSSNQIGLIVTSSGIQQSSTDTNKGDILGNVLEHSEDVFISGVQPESIAYRDGRLRQGDQILRINGLDVKNQEELETQIARSSTSVTLLVSRILYPEDDDDEDIHFEYANTFLPDDYTNVVDKLDKVLLTHVKSLEELSNKSAMQSDECYHIPEKNSSDSNVKISSLAKNIIEQSTKSCSKIKLRPNANLDYKKKFNLPLSQEEVHLQYEYDESEHIYETIPEDSESEPVYCSPYQRSNDKTSIGCSSPIASRPAESLERTMQQQTQRVAQWLGLKPQYQKTRQTLVGRPPPLKLVQQPTCSRVFTLRSTLTNTSASSSSGVAYSSYGQNNVVTGNAAAPGEEVDNSSSAYNTGDSNNSASPHQNTTNPDEAIATGRKLDSTVIDSPNDHLDATGVSTMLLLPFGKSGRIGLCSSNLPTAYVSERYTNVGSENEIHPLKSDIEILRVKPTDDSYSHCPQFNAPNLSSYHFVSSQEVANRCHISTSLQKNATLLNGESAEEIPMVWKVKRRPDGTRYIVKRPVRNRPQVALRKNMRYNEVTTTEDDTISEVKIGRYWTKEERKRHIERAREKRHHQTQQQQQ.

Residues glutamine 202–leucine 280 enclose the PDZ domain. Disordered stretches follow at residues glycine 521–glutamate 557 and lysine 744–glutamine 767. Residues asparagine 532–proline 555 are compositionally biased toward polar residues. Basic and acidic residues predominate over residues lysine 744 to arginine 755.

Interacts with Slo. In terms of tissue distribution, in embryos, it is expressed throughout the CNS and in several peripheral locations. Colocalizes with Slo.

Functionally, may selectively reduce calcium-activated potassium channel (Slo) currents by reducing the number of Slo channels in the plasma membrane. The protein is Slo-interacting protein 1 (Slip1) of Drosophila melanogaster (Fruit fly).